Consider the following 234-residue polypeptide: Glucosamine-6-phosphate deaminase (234 aa).

The Proton acceptor; for enolization step role is filled by Asp-63. The active-site For ring-opening step is Asn-129. The active-site Proton acceptor; for ring-opening step is the His-131. Catalysis depends on Glu-136, which acts as the For ring-opening step.

Belongs to the glucosamine/galactosamine-6-phosphate isomerase family. NagB subfamily.

It catalyses the reaction alpha-D-glucosamine 6-phosphate + H2O = beta-D-fructose 6-phosphate + NH4(+). Its pathway is amino-sugar metabolism; N-acetylneuraminate degradation; D-fructose 6-phosphate from N-acetylneuraminate: step 5/5. Functionally, catalyzes the reversible isomerization-deamination of glucosamine 6-phosphate (GlcN6P) to form fructose 6-phosphate (Fru6P) and ammonium ion. This is Glucosamine-6-phosphate deaminase from Listeria monocytogenes serovar 1/2a (strain ATCC BAA-679 / EGD-e).